Here is a 500-residue protein sequence, read N- to C-terminus: Polyenoic fatty acid isomerase (500 aa).

A signal peptide spans Met1 to Thr21.

In terms of assembly, homodimer. The cofactor is an oxidized flavin. In terms of processing, glycosylated.

The catalysed reaction is (5Z,8Z,11Z,14Z,17Z)-eicosapentaenoate = (5Z,7E,9E,14Z,17Z)-icosapentaenoate. Functionally, involved in the biosynthesis of conjugated triene-containing fatty acids. Catalyzes the isomerization of a wide range of substrates containing three or more methylene interrupted olefins into a Z,E,E conjugated triene functionality. May be involved in a stress tolerance mechanism as response to intertidal habitats with direct sunlight, desiccation and high temperature. In vitro substrates include arachidonic acid ((5Z,8Z,11Z,14Z)-eicosatetraenoic acid), EPA ((5Z,8Z, 11Z,14Z,17Z)-eicosapentaenoic acid), DHA ((4Z,7Z,10Z,13Z,16Z,19Z)-docosahexenoic acid), adrenic acid ((7Z,10Z,13Z,16Z)-docosatetraenoic acid), anandamide (arachidonyl-N-ethanolamide) and eicosatrienoic acid ((5Z,8Z,11Z)-eicosatrienoic acid). Gamma-linolenic acid (18:3 6Z,9Z,12Z) and dihomo-gamma-linolenic acid (20:3 8Z,11Z,14Z) are transformed into mixtures of conjugated diene and triene fatty acids, linoleic acid is only transformed to a conjugated diene. The chain is Polyenoic fatty acid isomerase from Ptilota filicina (Red alga).